Here is a 459-residue protein sequence, read N- to C-terminus: Pentatricopeptide repeat-containing protein At1g07740, mitochondrial (459 aa).

The N-terminal 20 residues, 1–20, are a transit peptide targeting the mitochondrion; that stretch reads MRRRLSSVLINNQCIASQRH. The tract at residues 19 to 41 is disordered; sequence RHYHTSRPEKPTKKASSHEPTHK. The span at 24–41 shows a compositional bias: basic and acidic residues; it reads SRPEKPTKKASSHEPTHK. 10 PPR repeats span residues 80–114, 115–149, 150–184, 185–219, 220–254, 255–289, 290–324, 325–359, 360–394, and 395–429; these read DYPSYSSLIYKLAKSRNFDAVDQILRLVRYRNVRC, RESLFMGLIQHYGKAGSVDKAIDVFHKITSFDCVR, TIQSLNTLINVLVDNGELEKAKSFFDGAKDMRLRP, NSVSFNILIKGFLDKCDWEAACKVFDEMLEMEVQP, SVVTYNSLIGFLCRNDDMGKAKSLLEDMIKKRIRP, NAVTFGLLMKGLCCKGEYNEAKKLMFDMEYRGCKP, GLVNYGILMSDLGKRGRIDEAKLLLGEMKKRRIKP, DVVIYNILVNHLCTECRVPEAYRVLTEMQMKGCKP, NAATYRMMIDGFCRIEDFDSGLNVLNAMLASRHCP, and TPATFVCMVAGLIKGGNLDHACFVLEVMGKKNLSF.

It belongs to the PPR family. P subfamily.

The protein resides in the mitochondrion. This Arabidopsis thaliana (Mouse-ear cress) protein is Pentatricopeptide repeat-containing protein At1g07740, mitochondrial.